The following is a 532-amino-acid chain: Small ribosomal subunit protein uS2cz (532 aa).

The interval 1-271 (METLEKNFKK…SPISSKEKKA (271 aa)) is N-terminal extension. TRAM domains follow at residues 38-97 (ALQA…SILN), 127-186 (DFKV…KPIL), and 197-260 (NQMI…KILK).

This sequence belongs to the universal ribosomal protein uS2 family.

The protein localises to the plastid. It localises to the chloroplast. The sequence is that of Small ribosomal subunit protein uS2cz (rps2-1) from Tetradesmus obliquus (Green alga).